The following is a 959-amino-acid chain: Mitogen-activated protein kinase kinase kinase 13 (959 aa).

Residues 1–47 (MANPQEHLSCSSLPHLPLTENKTSGGRNELAAMGNHPSPKLPEDPQE) form a disordered region. Positions 7-18 (HLSCSSLPHLPL) are enriched in low complexity. Positions 167-408 (ISELQWLGSG…FRQTLMHLDI (242 aa)) constitute a Protein kinase domain. ATP-binding positions include 173-181 (LGSGAQGAV) and lysine 194. Catalysis depends on aspartate 278, which acts as the Proton acceptor. Leucine-zipper stretches follow at residues 432–453 (VKKHFEKIKSEGTCIHRLDEEL) and 485–506 (LSAIMLQLEMREKELLKREQAV). Disordered regions lie at residues 533 to 599 (KRKG…GSHS), 739 to 828 (GSLD…RQRP), 842 to 902 (SSEN…LSDK), and 927 to 959 (NPVQFGDSDCDSSEGECSDATVRTSKNYSSATW). A compositionally biased stretch (polar residues) spans 566 to 577 (SPLSGSPKMSTA). Residues 581–593 (SRYRSKPRHRRGN) are compositionally biased toward basic residues. Composition is skewed to polar residues over residues 754 to 774 (DLSSSPAHNPLSGNAQGSERT) and 780 to 790 (SGCQSGISHQF). A compositionally biased stretch (acidic residues) spans 808-820 (DSSEEEGEVDSEV). Residues 866-876 (SANRRQDRLAE) are compositionally biased toward basic and acidic residues. Over residues 934-943 (SDCDSSEGEC) the composition is skewed to acidic residues. A compositionally biased stretch (polar residues) spans 947 to 959 (TVRTSKNYSSATW).

Belongs to the protein kinase superfamily. STE Ser/Thr protein kinase family. MAP kinase kinase kinase subfamily. As to quaternary structure, homodimer; forms dimers through the leucine-zipper motif. Interacts with the C-terminus of MAPK8IP1 through the kinase catalytic domain. Binds PRDX3. Associates with the IKK complex through the kinase domain. It depends on Mg(2+) as a cofactor. Post-translationally, autophosphorylated on serine and threonine residues.

The protein resides in the cytoplasm. The protein localises to the membrane. The enzyme catalyses L-seryl-[protein] + ATP = O-phospho-L-seryl-[protein] + ADP + H(+). It carries out the reaction L-threonyl-[protein] + ATP = O-phospho-L-threonyl-[protein] + ADP + H(+). With respect to regulation, activated by autophosphorylation and homodimerization. In terms of biological role, activates the JUN N-terminal pathway through activation of the MAP kinase kinase MAP2K7. Acts synergistically with PRDX3 to regulate the activation of NF-kappa-B in the cytosol. This activation is kinase-dependent and involves activating the IKK complex, the IKBKB-containing complex that phosphorylates inhibitors of NF-kappa-B. The polypeptide is Mitogen-activated protein kinase kinase kinase 13 (Map3k13) (Mus musculus (Mouse)).